A 155-amino-acid polypeptide reads, in one-letter code: Small ribosomal subunit protein uS7cz/uS7cy (155 aa).

Belongs to the universal ribosomal protein uS7 family. As to quaternary structure, part of the 30S ribosomal subunit.

Its subcellular location is the plastid. The protein localises to the chloroplast. In terms of biological role, one of the primary rRNA binding proteins, it binds directly to 16S rRNA where it nucleates assembly of the head domain of the 30S subunit. The sequence is that of Small ribosomal subunit protein uS7cz/uS7cy (rps7-A) from Phalaenopsis aphrodite subsp. formosana (Moth orchid).